The chain runs to 187 residues: Ethylene-responsive transcription factor ERF015 (187 aa).

The AP2/ERF DNA-binding region spans 26–83 (CYRGVRKRSWGKWVSEIRVPKTGRRIWLGSYDAPEKAARAYDAALFCIRGEKGVYNFP).

This sequence belongs to the AP2/ERF transcription factor family. ERF subfamily.

The protein localises to the nucleus. Its function is as follows. Probably acts as a transcriptional activator. Binds to the GCC-box pathogenesis-related promoter element. May be involved in the regulation of gene expression by stress factors and by components of stress signal transduction pathways. The protein is Ethylene-responsive transcription factor ERF015 (ERF015) of Arabidopsis thaliana (Mouse-ear cress).